The chain runs to 339 residues: Methionine synthase (339 aa).

Zn(2+)-binding residues include histidine 212, cysteine 214, and cysteine 295.

This sequence belongs to the archaeal MetE family. The cofactor is Zn(2+).

Its pathway is amino-acid biosynthesis; L-methionine biosynthesis via de novo pathway. Its function is as follows. Catalyzes the transfer of a methyl group to L-homocysteine resulting in methionine formation. The physiological methyl donor is unknown. In Sulfolobus acidocaldarius (strain ATCC 33909 / DSM 639 / JCM 8929 / NBRC 15157 / NCIMB 11770), this protein is Methionine synthase.